The chain runs to 467 residues: Asparagine--tRNA ligase (467 aa).

This sequence belongs to the class-II aminoacyl-tRNA synthetase family. In terms of assembly, homodimer.

It localises to the cytoplasm. It catalyses the reaction tRNA(Asn) + L-asparagine + ATP = L-asparaginyl-tRNA(Asn) + AMP + diphosphate + H(+). This Haemophilus influenzae (strain ATCC 51907 / DSM 11121 / KW20 / Rd) protein is Asparagine--tRNA ligase.